The following is a 211-amino-acid chain: Large ribosomal subunit protein uL3 (211 aa).

This sequence belongs to the universal ribosomal protein uL3 family. As to quaternary structure, part of the 50S ribosomal subunit. Forms a cluster with proteins L14 and L19.

In terms of biological role, one of the primary rRNA binding proteins, it binds directly near the 3'-end of the 23S rRNA, where it nucleates assembly of the 50S subunit. This Geobacter sp. (strain M21) protein is Large ribosomal subunit protein uL3.